The sequence spans 310 residues: Olfactory receptor 4C11 (310 aa).

The Extracellular segment spans residues 1 to 23 (MQQNNSVPEFILLGLTQDPLRQK). N4 carries an N-linked (GlcNAc...) asparagine glycan. Residues 24–47 (IVFVIFLIFYMGTVVGNMLIIVTI) form a helical membrane-spanning segment. Residues 48–55 (KSSRTLGS) lie on the Cytoplasmic side of the membrane. A helical membrane pass occupies residues 56–77 (PMYFFLFYLSFADSCFSTSTAP). Over 78–98 (RLIVDALSEKKIITYNECMTQ) the chain is Extracellular. C95 and C187 are oxidised to a cystine. A helical membrane pass occupies residues 99–118 (VFALHLFGCMEIFVLILMAV). The Cytoplasmic segment spans residues 119 to 137 (DRYVAICKPLRYPTIMSQQ). A helical membrane pass occupies residues 138–156 (VCIILIVLAWIGSLIHSTA). The Extracellular segment spans residues 157 to 193 (QIILALRLPFCGPYLIDHYCCDLQPLLKLACMDTYMI). A helical membrane pass occupies residues 194–217 (NLLLVSNSGAICSSSFMILIISYI). The Cytoplasmic segment spans residues 218-233 (VILHSLRNHSAKGKKK). A helical transmembrane segment spans residues 234 to 256 (ALSACTSHIIVVILFFGPCIFIY). The Extracellular portion of the chain corresponds to 257–267 (TRPPTTFPMDK). Residues 268-287 (MVAVFYTIGTPFLNPLIYTL) traverse the membrane as a helical segment. Residues 288-310 (RNAEVKNAMRKLWHGKIISENKG) are Cytoplasmic-facing.

This sequence belongs to the G-protein coupled receptor 1 family.

It is found in the cell membrane. Its function is as follows. Odorant receptor. In Homo sapiens (Human), this protein is Olfactory receptor 4C11 (OR4C11).